The following is a 374-amino-acid chain: Methionine import ATP-binding protein MetN 2 (374 aa).

The ABC transporter domain maps to 32–271 (VRFVGLGKTY…PQHEVSQTLL (240 aa)). ATP is bound at residue 68–75 (GRSGAGKS).

It belongs to the ABC transporter superfamily. Methionine importer (TC 3.A.1.24) family. The complex is composed of two ATP-binding proteins (MetN), two transmembrane proteins (MetI) and a solute-binding protein (MetQ).

It is found in the cell inner membrane. The enzyme catalyses L-methionine(out) + ATP + H2O = L-methionine(in) + ADP + phosphate + H(+). The catalysed reaction is D-methionine(out) + ATP + H2O = D-methionine(in) + ADP + phosphate + H(+). Its function is as follows. Part of the ABC transporter complex MetNIQ involved in methionine import. Responsible for energy coupling to the transport system. The protein is Methionine import ATP-binding protein MetN 2 of Pseudomonas fluorescens (strain Pf0-1).